We begin with the raw amino-acid sequence, 153 residues long: Putative adenylate kinase (153 aa).

5 residues coordinate ATP: Gly12, Gly14, Lys15, Ser16, and Thr17. The interval Glu31 to Val47 is NMP. Residues Ala94 to Glu104 are LID. Arg95 serves as a coordination point for ATP.

This sequence belongs to the adenylate kinase family. AK6 subfamily. In terms of assembly, interacts with uS11. Not a structural component of 40S pre-ribosomes, but transiently interacts with them by binding to uS11.

It carries out the reaction AMP + ATP = 2 ADP. The catalysed reaction is ATP + H2O = ADP + phosphate + H(+). Its function is as follows. Broad-specificity nucleoside monophosphate (NMP) kinase that catalyzes the reversible transfer of the terminal phosphate group between nucleoside triphosphates and monophosphates. Also has ATPase activity. Involved in the late maturation steps of the 30S ribosomal particles, specifically 16S rRNA maturation. While NMP activity is not required for ribosome maturation, ATPase activity is. Associates transiently with small ribosomal subunit protein uS11. ATP hydrolysis breaks the interaction with uS11. May temporarily remove uS11 from the ribosome to enable a conformational change of the ribosomal RNA that is needed for the final maturation step of the small ribosomal subunit. The polypeptide is Putative adenylate kinase (Thermoplasma volcanium (strain ATCC 51530 / DSM 4299 / JCM 9571 / NBRC 15438 / GSS1)).